Consider the following 396-residue polypeptide: Tryptophan synthase beta chain (396 aa).

N6-(pyridoxal phosphate)lysine is present on lysine 86.

The protein belongs to the TrpB family. Tetramer of two alpha and two beta chains. The cofactor is pyridoxal 5'-phosphate.

The enzyme catalyses (1S,2R)-1-C-(indol-3-yl)glycerol 3-phosphate + L-serine = D-glyceraldehyde 3-phosphate + L-tryptophan + H2O. It functions in the pathway amino-acid biosynthesis; L-tryptophan biosynthesis; L-tryptophan from chorismate: step 5/5. Its function is as follows. The beta subunit is responsible for the synthesis of L-tryptophan from indole and L-serine. This is Tryptophan synthase beta chain from Aliivibrio fischeri (strain ATCC 700601 / ES114) (Vibrio fischeri).